The chain runs to 212 residues: Thymidylate kinase (212 aa).

Position 10 to 17 (10 to 17 (GLEGAGKT)) interacts with ATP.

The protein belongs to the thymidylate kinase family.

The catalysed reaction is dTMP + ATP = dTDP + ADP. Its function is as follows. Phosphorylation of dTMP to form dTDP in both de novo and salvage pathways of dTTP synthesis. The protein is Thymidylate kinase of Yersinia pseudotuberculosis serotype O:1b (strain IP 31758).